An 872-amino-acid chain; its full sequence is Tegument protein UL47 homolog (872 aa).

The interval methionine 1–aspartate 206 is disordered. The Nuclear localization signal signature appears at isoleucine 13–threonine 33. Residues glycine 31–arginine 41 show a composition bias toward polar residues. Composition is skewed to low complexity over residues glutamate 66–serine 80 and aspartate 91–arginine 101. Acidic residues-rich tracts occupy residues proline 110 to glutamine 134 and alanine 177 to serine 204.

It belongs to the alphaherpesvirinae HHV-1 UL47 family. In terms of assembly, interacts with US3 kinase. Interacts with UL31 and UL34; these interactions seem important for efficient virion nuclear egress. Interacts with UL41/VHS. Phosphorylated by US3. This phosphorylation is required for proper nuclear localization. In terms of processing, O-glycosylated.

It localises to the virion tegument. The protein resides in the host nucleus. The protein localises to the host cytoplasm. Functionally, tegument protein that can bind to various RNA transcripts. Plays a role in the attenuation of selective viral and cellular mRNA degradation by modulating the activity of host shutoff RNase UL41/VHS. Also plays a role in the primary envelopment of virions in the perinuclear space, probably by interacting with two nuclear egress proteins UL31 and UL34. This chain is Tegument protein UL47 homolog (13), found in Equus caballus (Horse).